The primary structure comprises 341 residues: UDP-3-O-(3-hydroxymyristoyl)glucosamine N-acyltransferase (341 aa).

His239 acts as the Proton acceptor in catalysis.

This sequence belongs to the transferase hexapeptide repeat family. LpxD subfamily. As to quaternary structure, homotrimer.

The catalysed reaction is a UDP-3-O-[(3R)-3-hydroxyacyl]-alpha-D-glucosamine + a (3R)-hydroxyacyl-[ACP] = a UDP-2-N,3-O-bis[(3R)-3-hydroxyacyl]-alpha-D-glucosamine + holo-[ACP] + H(+). It carries out the reaction UDP-3-O-[(3R)-3-hydroxytetradecanoyl]-alpha-D-glucosamine + (3R)-hydroxytetradecanoyl-[ACP] = UDP-2-N,3-O-bis[(3R)-3-hydroxytetradecanoyl]-alpha-D-glucosamine + holo-[ACP] + H(+). Its pathway is glycolipid biosynthesis; lipid IV(A) biosynthesis; lipid IV(A) from (3R)-3-hydroxytetradecanoyl-[acyl-carrier-protein] and UDP-N-acetyl-alpha-D-glucosamine: step 3/6. Functionally, catalyzes the N-acylation of UDP-3-O-(hydroxytetradecanoyl)glucosamine using 3-hydroxytetradecanoyl-ACP as the acyl donor. Is involved in the biosynthesis of lipid A, a phosphorylated glycolipid that anchors the lipopolysaccharide to the outer membrane of the cell. The polypeptide is UDP-3-O-(3-hydroxymyristoyl)glucosamine N-acyltransferase (Shigella dysenteriae serotype 1 (strain Sd197)).